Consider the following 276-residue polypeptide: Small ribosomal subunit protein uS2 (276 aa).

This sequence belongs to the universal ribosomal protein uS2 family.

This Chlamydia caviae (strain ATCC VR-813 / DSM 19441 / 03DC25 / GPIC) (Chlamydophila caviae) protein is Small ribosomal subunit protein uS2.